A 305-amino-acid polypeptide reads, in one-letter code: Sulfate adenylyltransferase subunit 2 (305 aa).

Residues 283-305 (RQGRVIDHDQSASMEKKKQEGYF) are disordered.

The protein belongs to the PAPS reductase family. CysD subfamily. As to quaternary structure, heterodimer composed of CysD, the smaller subunit, and CysN.

It catalyses the reaction sulfate + ATP + H(+) = adenosine 5'-phosphosulfate + diphosphate. Its pathway is sulfur metabolism; hydrogen sulfide biosynthesis; sulfite from sulfate: step 1/3. In terms of biological role, with CysN forms the ATP sulfurylase (ATPS) that catalyzes the adenylation of sulfate producing adenosine 5'-phosphosulfate (APS) and diphosphate, the first enzymatic step in sulfur assimilation pathway. APS synthesis involves the formation of a high-energy phosphoric-sulfuric acid anhydride bond driven by GTP hydrolysis by CysN coupled to ATP hydrolysis by CysD. This chain is Sulfate adenylyltransferase subunit 2, found in Caulobacter sp. (strain K31).